The chain runs to 57 residues: Large ribosomal subunit protein uL30 (57 aa).

This sequence belongs to the universal ribosomal protein uL30 family. Part of the 50S ribosomal subunit.

The protein is Large ribosomal subunit protein uL30 of Maridesulfovibrio salexigens (strain ATCC 14822 / DSM 2638 / NCIMB 8403 / VKM B-1763) (Desulfovibrio salexigens).